We begin with the raw amino-acid sequence, 238 residues long: Zinc-finger homeodomain protein 11 (238 aa).

Residues 12 to 59 form a ZF-HD dimerization-type; degenerate zinc finger; that stretch reads YRECMRNHAAKLGTYANDGCCEYTPDDGHPAGLLCAACGCHRNFHRKD. Residues 119–188 constitute a DNA-binding region (homeobox); the sequence is RRRTRTKFTE…NHKAGGGGGG (70 aa). Gly residues predominate over residues 183 to 200; sequence GGGGGGGGSGGPGAGGGA. A disordered region spans residues 183-238; sequence GGGGGGGGSGGPGAGGGAQTSSSTTRGGGDVGVGLSPAMGGDGEDDEEVRGSEMCM.

Homo- and heterodimer with other ZFHD proteins.

The protein localises to the nucleus. Putative transcription factor. This is Zinc-finger homeodomain protein 11 (ZHD11) from Oryza sativa subsp. indica (Rice).